We begin with the raw amino-acid sequence, 398 residues long: MQKRLTLLGSTGSIGDSTLDVVARHPERFAVHALTAHRNGEKLVAQCLRFAPDVAVVGDAETAARVEAQLRAAGSRTQVAYGKQALVDVSKSDGCDTVVAAIVGAAGLAPSLAAARAGKRILLANKEALVMSGAIFMDAVRDHGAILLPVDSEHNAIFQCMPRDAAEHGGIAKIIVTASGGPFRTREPATLASVTPDEACKHPNWVMGRKISVDSATMMNKGLEVIEAHWLFGLPSEHIDVLIHPQSVIHSLVSYRDGSVLAQLGNPDMRTPIAHALAFPERVDAGVAQLDLAQIATLTFEKPDYARFPCLALAIDALEAGGVASAALNAANEIAVDAFLSRRIRFTAIAQTVGAVLDGLSNRTPGGLDDVIEADAAARRAATAFIGKLPAPGVERAA.

7 residues coordinate NADPH: T11, G12, S13, I14, R38, N39, and N125. Position 126 (K126) interacts with 1-deoxy-D-xylulose 5-phosphate. E127 is a binding site for NADPH. A Mn(2+)-binding site is contributed by D151. 1-deoxy-D-xylulose 5-phosphate-binding residues include S152, E153, S179, and H202. E153 contributes to the Mn(2+) binding site. Position 208 (G208) interacts with NADPH. 4 residues coordinate 1-deoxy-D-xylulose 5-phosphate: S215, N220, K221, and E224. Residue E224 participates in Mn(2+) binding.

This sequence belongs to the DXR family. Requires Mg(2+) as cofactor. Mn(2+) is required as a cofactor.

The catalysed reaction is 2-C-methyl-D-erythritol 4-phosphate + NADP(+) = 1-deoxy-D-xylulose 5-phosphate + NADPH + H(+). The protein operates within isoprenoid biosynthesis; isopentenyl diphosphate biosynthesis via DXP pathway; isopentenyl diphosphate from 1-deoxy-D-xylulose 5-phosphate: step 1/6. Catalyzes the NADPH-dependent rearrangement and reduction of 1-deoxy-D-xylulose-5-phosphate (DXP) to 2-C-methyl-D-erythritol 4-phosphate (MEP). The sequence is that of 1-deoxy-D-xylulose 5-phosphate reductoisomerase from Burkholderia mallei (strain NCTC 10247).